The chain runs to 146 residues: 3-dehydroquinate dehydratase (146 aa).

Residue Tyr-22 is the Proton acceptor of the active site. Substrate-binding residues include Asn-73, His-79, and Asp-86. His-99 functions as the Proton donor in the catalytic mechanism. Substrate contacts are provided by residues 100–101 (LS) and Arg-110.

It belongs to the type-II 3-dehydroquinase family. Homododecamer.

The catalysed reaction is 3-dehydroquinate = 3-dehydroshikimate + H2O. It functions in the pathway metabolic intermediate biosynthesis; chorismate biosynthesis; chorismate from D-erythrose 4-phosphate and phosphoenolpyruvate: step 3/7. Catalyzes a trans-dehydration via an enolate intermediate. This is 3-dehydroquinate dehydratase from Synechococcus sp. (strain CC9902).